The chain runs to 777 residues: DNA ligase (777 aa).

NAD(+) is bound by residues 35–39 (DAEYD), 84–85 (SL), and Glu-116. Lys-118 (N6-AMP-lysine intermediate) is an active-site residue. NAD(+)-binding residues include Arg-139, Glu-176, Lys-293, and Lys-317. Positions 411, 414, 429, and 435 each coordinate Zn(2+). The BRCT domain maps to 691-777 (MESQPLEGQT…NQHGIDPGAL (87 aa)).

This sequence belongs to the NAD-dependent DNA ligase family. LigA subfamily. Mg(2+) is required as a cofactor. Requires Mn(2+) as cofactor.

It carries out the reaction NAD(+) + (deoxyribonucleotide)n-3'-hydroxyl + 5'-phospho-(deoxyribonucleotide)m = (deoxyribonucleotide)n+m + AMP + beta-nicotinamide D-nucleotide.. Functionally, DNA ligase that catalyzes the formation of phosphodiester linkages between 5'-phosphoryl and 3'-hydroxyl groups in double-stranded DNA using NAD as a coenzyme and as the energy source for the reaction. It is essential for DNA replication and repair of damaged DNA. In Alcanivorax borkumensis (strain ATCC 700651 / DSM 11573 / NCIMB 13689 / SK2), this protein is DNA ligase.